The chain runs to 22 residues: Oxygen-evolving enhancer protein 2 (22 aa).

This sequence belongs to the PsbP family.

The protein localises to the plastid. It localises to the chloroplast thylakoid membrane. May be involved in the regulation of photosystem II. This Physcomitrium patens (Spreading-leaved earth moss) protein is Oxygen-evolving enhancer protein 2.